A 507-amino-acid chain; its full sequence is Maturase K (507 aa).

The protein belongs to the intron maturase 2 family. MatK subfamily.

Its subcellular location is the plastid. The protein resides in the chloroplast. Usually encoded in the trnK tRNA gene intron. Probably assists in splicing its own and other chloroplast group II introns. The sequence is that of Maturase K from Lyonia ligustrina (Maleberry).